The following is a 440-amino-acid chain: Methylthioribose-1-phosphate isomerase (440 aa).

Asp285 (proton donor) is an active-site residue.

It belongs to the eIF-2B alpha/beta/delta subunits family. MtnA subfamily.

It is found in the cytoplasm. The protein resides in the nucleus. The catalysed reaction is 5-(methylsulfanyl)-alpha-D-ribose 1-phosphate = 5-(methylsulfanyl)-D-ribulose 1-phosphate. Its pathway is amino-acid biosynthesis; L-methionine biosynthesis via salvage pathway; L-methionine from S-methyl-5-thio-alpha-D-ribose 1-phosphate: step 1/6. Its function is as follows. Catalyzes the interconversion of methylthioribose-1-phosphate (MTR-1-P) into methylthioribulose-1-phosphate (MTRu-1-P). The protein is Methylthioribose-1-phosphate isomerase (mri1) of Botryotinia fuckeliana (strain B05.10) (Noble rot fungus).